The chain runs to 631 residues: Phosphomethylpyrimidine synthase (631 aa).

Substrate is bound by residues Asn-239, Met-268, Tyr-297, His-333, 353–355, 394–397, and Glu-433; these read SRG and DGLR. Residue His-437 participates in Zn(2+) binding. Tyr-460 serves as a coordination point for substrate. His-501 is a Zn(2+) binding site. The [4Fe-4S] cluster site is built by Cys-581, Cys-584, and Cys-589.

This sequence belongs to the ThiC family. As to quaternary structure, homodimer. It depends on [4Fe-4S] cluster as a cofactor.

It carries out the reaction 5-amino-1-(5-phospho-beta-D-ribosyl)imidazole + S-adenosyl-L-methionine = 4-amino-2-methyl-5-(phosphooxymethyl)pyrimidine + CO + 5'-deoxyadenosine + formate + L-methionine + 3 H(+). The protein operates within cofactor biosynthesis; thiamine diphosphate biosynthesis. In terms of biological role, catalyzes the synthesis of the hydroxymethylpyrimidine phosphate (HMP-P) moiety of thiamine from aminoimidazole ribotide (AIR) in a radical S-adenosyl-L-methionine (SAM)-dependent reaction. This Escherichia coli O45:K1 (strain S88 / ExPEC) protein is Phosphomethylpyrimidine synthase.